A 653-amino-acid polypeptide reads, in one-letter code: Poly [ADP-ribose] polymerase 2 (653 aa).

The region spanning 2-36 (SARLRVADVRAELQRRGLDVSGTKPALVRRLDAAI) is the SAP 1 domain. Residues 64–84 (NCGNNKRKRSGDGGEEGNGDT) are disordered. The short motif at 69–72 (KRKR) is the Nuclear localization signal element. Positions 91-125 (LEGMSYRELQGLAKARGVAANGGKKDVIQRLLSAT) constitute an SAP 2 domain. The region spanning 179 to 276 (NYHVLQVGDE…KNFKCYAKKY (98 aa)) is the WGR domain. The PARP alpha-helical domain maps to 301 to 419 (ETKLETRIAQ…EIEIATKLLE (119 aa)). A PARP catalytic domain is found at 427–653 (DPLYARYKQL…LHVNFNFKRR (227 aa)).

This sequence belongs to the ARTD/PARP family.

The protein localises to the nucleus. The catalysed reaction is NAD(+) + (ADP-D-ribosyl)n-acceptor = nicotinamide + (ADP-D-ribosyl)n+1-acceptor + H(+).. The enzyme catalyses L-aspartyl-[protein] + NAD(+) = 4-O-(ADP-D-ribosyl)-L-aspartyl-[protein] + nicotinamide. It catalyses the reaction L-glutamyl-[protein] + NAD(+) = 5-O-(ADP-D-ribosyl)-L-glutamyl-[protein] + nicotinamide. In terms of biological role, involved in the base excision repair (BER) pathway, by catalyzing the poly(ADP-ribosyl)ation of a limited number of acceptor proteins involved in chromatin architecture and in DNA metabolism. This modification follows DNA damages and appears as an obligatory step in a detection/signaling pathway leading to the reparation of DNA strand breaks. This chain is Poly [ADP-ribose] polymerase 2 (PARP2), found in Zea mays (Maize).